Consider the following 386-residue polypeptide: 11-beta-hydroxysteroid dehydrogenase type 2 (386 aa).

Residue 82–111 (TRAVLITGCDTGFGKETAKKLDAMGFTVLA) participates in NAD(+) binding. Serine 219 provides a ligand contact to substrate. Residue tyrosine 232 is the Proton acceptor of the active site.

Belongs to the short-chain dehydrogenases/reductases (SDR) family. As to quaternary structure, interacts with ligand-free cytoplasmic NR3C2. As to expression, highly expressed in kidney. Also found in colon and small intestine. Not expressed in the adrenal gland. Expressed in uterus.

It is found in the microsome. Its subcellular location is the endoplasmic reticulum. It carries out the reaction an 11beta-hydroxysteroid + NAD(+) = an 11-oxosteroid + NADH + H(+). The enzyme catalyses corticosterone + NAD(+) = 11-dehydrocorticosterone + NADH + H(+). It catalyses the reaction 11beta,17beta-dihydroxyandrost-4-ene-3-one + NAD(+) = 17beta-hydroxyandrost-4-ene-3,11-dione + NADH + H(+). The catalysed reaction is 11beta-hydroxyandrost-4-ene-3,17-dione + NAD(+) = androst-4-ene-3,11,17-trione + NADH + H(+). It functions in the pathway steroid metabolism. With respect to regulation, inhibited by glycyrrhetinic acid. Induced by progesterone, through the Ihh signaling pathway. In terms of biological role, catalyzes the conversion of biologically active 11beta-hydroxyglucocorticoids (11beta-hydroxysteroid) such as corticosterone, to inactive 11-ketoglucocorticoids (11-oxosteroid) such as 11-dehydrocorticosterone, in the presence of NAD(+). Functions as a dehydrogenase (oxidase), thereby decreasing the concentration of active glucocorticoids, thus protecting the nonselective mineralocorticoid receptor from occupation by glucocorticoids. Plays an important role in maintaining glucocorticoids balance during preimplantation and protects the fetus from excessive maternal corticosterone exposure. Catalyzes the oxidation of 11beta-hydroxytestosterone (11beta,17beta-dihydroxyandrost-4-ene-3-one) to 11-ketotestosterone (17beta-hydroxyandrost-4-ene-3,11-dione), a major bioactive androgen. Catalyzes the conversion of 11beta-hydroxyandrostenedione (11beta-hydroxyandrost-4-ene-3,17-dione) to 11-ketoandrostenedione (androst-4-ene-3,11,17-trione), which can be further metabolized to 11-ketotestosterone. Converts 7-beta-25-dihydroxycholesterol to 7-oxo-25-hydroxycholesterol in vitro. 7-beta-25-dihydroxycholesterol (not 7-oxo-25-hydroxycholesterol) acts as a ligand for the G-protein-coupled receptor (GPCR) Epstein-Barr virus-induced gene 2 (EBI2) and may thereby regulate immune cell migration. This is 11-beta-hydroxysteroid dehydrogenase type 2 (Hsd11b2) from Mus musculus (Mouse).